The sequence spans 486 residues: L-arabinose isomerase (486 aa).

E299, E324, H341, and H440 together coordinate Mn(2+).

It belongs to the arabinose isomerase family. Mn(2+) is required as a cofactor.

The enzyme catalyses beta-L-arabinopyranose = L-ribulose. Its pathway is carbohydrate degradation; L-arabinose degradation via L-ribulose; D-xylulose 5-phosphate from L-arabinose (bacterial route): step 1/3. Its function is as follows. Catalyzes the conversion of L-arabinose to L-ribulose. This is L-arabinose isomerase from Shouchella clausii (strain KSM-K16) (Alkalihalobacillus clausii).